The chain runs to 309 residues: Methionyl-tRNA formyltransferase (309 aa).

109–112 (SLLP) lines the (6S)-5,6,7,8-tetrahydrofolate pocket.

This sequence belongs to the Fmt family.

The enzyme catalyses L-methionyl-tRNA(fMet) + (6R)-10-formyltetrahydrofolate = N-formyl-L-methionyl-tRNA(fMet) + (6S)-5,6,7,8-tetrahydrofolate + H(+). Its function is as follows. Attaches a formyl group to the free amino group of methionyl-tRNA(fMet). The formyl group appears to play a dual role in the initiator identity of N-formylmethionyl-tRNA by promoting its recognition by IF2 and preventing the misappropriation of this tRNA by the elongation apparatus. The sequence is that of Methionyl-tRNA formyltransferase from Chloroflexus aggregans (strain MD-66 / DSM 9485).